The following is a 273-amino-acid chain: MSDIETVSSFVEGAPPGELADVIADIKSLTLETNPDIVNSLTPAFEKYNEEQFVTVKLPGSSQPVIISSYNSLGDGRYFDVESSSSFTFDHTTQKASAVQSHVLEGAQADLVKSTLKSIGPYVDEHFANAAHGVYPIESDSKIAIVIVGNKYSPNNFWNGRWRSLYILDPSSGALEGSLKVDVHYYEDGNVRLLTNKPVSSTISSANGAGIVREISAMEKRYQEELNKGFVSLSEGAFKGLRRQLPVTRQKIEWDRVTSYRLGQDIGNGGSRR.

Belongs to the F-actin-capping protein alpha subunit family. As to quaternary structure, heterodimer of an alpha and a beta subunit.

The protein resides in the cytoplasm. Its subcellular location is the cytoskeleton. Its function is as follows. F-actin-capping proteins bind in a Ca(2+)-independent manner to the fast growing ends of actin filaments (barbed end) thereby blocking the exchange of subunits at these ends. Unlike other capping proteins (such as gelsolin and severin), these proteins do not sever actin filaments. This Gibberella zeae (strain ATCC MYA-4620 / CBS 123657 / FGSC 9075 / NRRL 31084 / PH-1) (Wheat head blight fungus) protein is F-actin-capping protein subunit alpha (CAP1).